Here is a 134-residue protein sequence, read N- to C-terminus: DNA polymerase III subunit psi (134 aa).

It belongs to the DNA polymerase III psi/HolD chain family. DNA polymerase III contains a core (composed of alpha, epsilon and theta chains) that associates with a tau subunit. This core dimerizes to form the POLIII' complex. PolIII' associates with the gamma complex (composed of gamma, delta, delta', psi and chi chains) and with the beta chain to form the complete DNA polymerase III complex. Interacts directly with the chi subunit (holC).

It carries out the reaction DNA(n) + a 2'-deoxyribonucleoside 5'-triphosphate = DNA(n+1) + diphosphate. Functionally, part of the beta sliding clamp loading complex, which hydrolyzes ATP to load the beta clamp onto primed DNA to form the DNA replication pre-initiation complex. DNA polymerase III is a complex, multichain enzyme responsible for most of the replicative synthesis in bacteria. This DNA polymerase also exhibits 3' to 5' exonuclease activity. This is DNA polymerase III subunit psi (holD) from Haemophilus influenzae (strain ATCC 51907 / DSM 11121 / KW20 / Rd).